The chain runs to 236 residues: Small ribosomal subunit protein uS10m (236 aa).

The transit peptide at Met1–Gln24 directs the protein to the mitochondrion. The tract at residues Lys29–Phe49 is disordered. Over residues Glu39–Phe49 the composition is skewed to basic and acidic residues.

This sequence belongs to the universal ribosomal protein uS10 family. Part of the mitochondrial small ribosomal subunit.

Its subcellular location is the mitochondrion. Involved in mitochondrial genome encoded proteins translation. Involved in the binding of tRNA to the ribosomes. In Gibberella zeae (strain ATCC MYA-4620 / CBS 123657 / FGSC 9075 / NRRL 31084 / PH-1) (Wheat head blight fungus), this protein is Small ribosomal subunit protein uS10m (RSM10).